A 399-amino-acid polypeptide reads, in one-letter code: MAHITLNQYLQQVLEAIDSRDGSFCAEMMSFKHPHVANPRLQLSSPEEKCQQLLEPPYDEMVAAHLRCTFAVSNHDFVEAYKCQTVVVQSFLKAFQAHKEENWALPIMFAVTLDLRIFANNAEQHLQQKGKGKVGDMLEKAAEQLMSCFRVCASDNRAGIDDSKKWGMLFLINQLFKIYFKINKLHLCKPLIRAIDSSNLKDEYTMAQRVTYKYYVGRKAMFDSDFKPAEECLSFSFTHCHRSCQRNKRLILIYLLPVKMLLGHMPTHQLLKKYDLMQFADVTRAVSEGNLLLLNAALVKHETFFIRCGIFLILEKLKIITYRNLFKKVYHLLRTHQLPLAAFLVSLQMTKVEDVDIDEVQCILANLIYMGHIKGYISHQHQKLVVSKQNPFPPLSSIS.

A PCI domain is found at 210–391 (VTYKYYVGRK…QKLVVSKQNP (182 aa)).

It belongs to the CSN12 family.

This Danio rerio (Zebrafish) protein is PCI domain-containing protein 2 (pcid2).